We begin with the raw amino-acid sequence, 132 residues long: Ragulator complex protein LAMTOR3 homolog (132 aa).

It belongs to the LAMTOR3 family. Part of the Ragulator complex.

Its function is as follows. Regulator of the TOR pathway, a signaling cascade that promotes cell growth in response to growth factors, energy levels, and amino acids. May activate the TOR signaling cascade in response to amino acids. This is Ragulator complex protein LAMTOR3 homolog from Dictyostelium discoideum (Social amoeba).